The following is a 427-amino-acid chain: Histidinol dehydrogenase (427 aa).

3 residues coordinate NAD(+): Tyr127, Gln187, and Asn210. Residues Ser233, Gln255, and His258 each coordinate substrate. Zn(2+) contacts are provided by Gln255 and His258. Catalysis depends on proton acceptor residues Glu323 and His324. Residues His324, Asp357, Glu411, and His416 each contribute to the substrate site. Asp357 is a Zn(2+) binding site. His416 lines the Zn(2+) pocket.

The protein belongs to the histidinol dehydrogenase family. Zn(2+) serves as cofactor.

It catalyses the reaction L-histidinol + 2 NAD(+) + H2O = L-histidine + 2 NADH + 3 H(+). The protein operates within amino-acid biosynthesis; L-histidine biosynthesis; L-histidine from 5-phospho-alpha-D-ribose 1-diphosphate: step 9/9. Functionally, catalyzes the sequential NAD-dependent oxidations of L-histidinol to L-histidinaldehyde and then to L-histidine. The protein is Histidinol dehydrogenase of Streptococcus mutans serotype c (strain ATCC 700610 / UA159).